Reading from the N-terminus, the 280-residue chain is Orotidine 5'-phosphate decarboxylase (280 aa).

Lysine 97 serves as the catalytic Proton donor.

The protein belongs to the OMP decarboxylase family. Type 2 subfamily.

The catalysed reaction is orotidine 5'-phosphate + H(+) = UMP + CO2. Its pathway is pyrimidine metabolism; UMP biosynthesis via de novo pathway; UMP from orotate: step 2/2. The polypeptide is Orotidine 5'-phosphate decarboxylase (pyrF) (Corynebacterium efficiens (strain DSM 44549 / YS-314 / AJ 12310 / JCM 11189 / NBRC 100395)).